A 727-amino-acid polypeptide reads, in one-letter code: Polyribonucleotide nucleotidyltransferase (727 aa).

Aspartate 491 and aspartate 497 together coordinate Mg(2+). The KH domain occupies 558–617 (PRIITASIHPDKIREVIGPGGKTIKKIIDETGVKIDIEDDGRVFISAVDGEAGENALKII). The S1 motif domain maps to 627 to 701 (GRIYNGRVTR…KQGRLNLSRK (75 aa)). Residues 698 to 727 (LSRKEALPNPNPSSNPNPNGITANRNPRNS) are disordered. Over residues 717 to 727 (GITANRNPRNS) the composition is skewed to polar residues.

It belongs to the polyribonucleotide nucleotidyltransferase family. It depends on Mg(2+) as a cofactor.

It is found in the cytoplasm. It carries out the reaction RNA(n+1) + phosphate = RNA(n) + a ribonucleoside 5'-diphosphate. In terms of biological role, involved in mRNA degradation. Catalyzes the phosphorolysis of single-stranded polyribonucleotides processively in the 3'- to 5'-direction. The polypeptide is Polyribonucleotide nucleotidyltransferase (Desulfitobacterium hafniense (strain Y51)).